We begin with the raw amino-acid sequence, 485 residues long: NADH-quinone oxidoreductase subunit N (485 aa).

14 helical membrane passes run 8 to 28 (LIAL…MLCI), 35 to 55 (FVNA…LYFV), 75 to 95 (FYTG…YPWL), 105 to 125 (FYLL…ANHL), 127 to 147 (SLFI…GYAF), 159 to 179 (YMLL…LIYA), 203 to 223 (LLAG…LVPF), 235 to 255 (PAPV…GAVM), 271 to 291 (IVLG…AVSQ), 297 to 317 (LLGY…IAVQ), 326 to 346 (VGVY…VVSL), 374 to 394 (AVMT…GFFG), 407 to 426 (LWWL…YYYL), and 449 to 469 (ALTA…FFGL).

This sequence belongs to the complex I subunit 2 family. In terms of assembly, NDH-1 is composed of 13 different subunits. Subunits NuoA, H, J, K, L, M, N constitute the membrane sector of the complex.

It is found in the cell inner membrane. It catalyses the reaction a quinone + NADH + 5 H(+)(in) = a quinol + NAD(+) + 4 H(+)(out). NDH-1 shuttles electrons from NADH, via FMN and iron-sulfur (Fe-S) centers, to quinones in the respiratory chain. The immediate electron acceptor for the enzyme in this species is believed to be ubiquinone. Couples the redox reaction to proton translocation (for every two electrons transferred, four hydrogen ions are translocated across the cytoplasmic membrane), and thus conserves the redox energy in a proton gradient. The sequence is that of NADH-quinone oxidoreductase subunit N from Pectobacterium carotovorum subsp. carotovorum (strain PC1).